The chain runs to 221 residues: Kynurenine formamidase (221 aa).

Phe-30 provides a ligand contact to substrate. His-60, His-64, and Asp-66 together coordinate Zn(2+). His-70 (proton donor/acceptor) is an active-site residue. Zn(2+) is bound by residues His-172 and Glu-184.

This sequence belongs to the Cyclase 1 superfamily. KynB family. In terms of assembly, homodimer. Zn(2+) is required as a cofactor.

The enzyme catalyses N-formyl-L-kynurenine + H2O = L-kynurenine + formate + H(+). It participates in amino-acid degradation; L-tryptophan degradation via kynurenine pathway; L-kynurenine from L-tryptophan: step 2/2. Its function is as follows. Catalyzes the hydrolysis of N-formyl-L-kynurenine to L-kynurenine, the second step in the kynurenine pathway of tryptophan degradation. The polypeptide is Kynurenine formamidase (Polaromonas sp. (strain JS666 / ATCC BAA-500)).